Consider the following 178-residue polypeptide: uncharacterized protein (178 aa).

Belongs to the tail fiber family.

This is an uncharacterized protein from Escherichia coli (strain K12).